The chain runs to 257 residues: Glutamate racemase (257 aa).

Substrate is bound by residues 12-13 (DS) and 44-45 (YG). Cys-75 acts as the Proton donor/acceptor in catalysis. 76–77 (NT) contributes to the substrate binding site. Cys-186 (proton donor/acceptor) is an active-site residue. 187 to 188 (TH) is a substrate binding site.

This sequence belongs to the aspartate/glutamate racemases family.

The enzyme catalyses L-glutamate = D-glutamate. It participates in cell wall biogenesis; peptidoglycan biosynthesis. Its function is as follows. Provides the (R)-glutamate required for cell wall biosynthesis. This is Glutamate racemase from Clostridium kluyveri (strain NBRC 12016).